The primary structure comprises 242 residues: Small ribosomal subunit protein uS2 (242 aa).

It belongs to the universal ribosomal protein uS2 family.

The protein is Small ribosomal subunit protein uS2 of Shewanella loihica (strain ATCC BAA-1088 / PV-4).